Consider the following 582-residue polypeptide: ATP-dependent lipid A-core flippase (582 aa).

5 helical membrane passes run 16–36 (LWPM…ALIL), 63–83 (ILVW…VSGF), 153–173 (IIGL…ILVV), 253–273 (PLIQ…ASFP), and 275–295 (VMET…IALM). One can recognise an ABC transmembrane type-1 domain in the interval 28–310 (IVAAIALILN…LTNVNAQFQR (283 aa)). Residues 342-578 (IAFDHVTFSY…QGVYAQLHQL (237 aa)) enclose the ABC transporter domain. 376 to 383 (GRSGSGKS) is a binding site for ATP.

This sequence belongs to the ABC transporter superfamily. Lipid exporter (TC 3.A.1.106) family. Homodimer.

It localises to the cell inner membrane. It carries out the reaction ATP + H2O + lipid A-core oligosaccharideSide 1 = ADP + phosphate + lipid A-core oligosaccharideSide 2.. Functionally, involved in lipopolysaccharide (LPS) biosynthesis. Translocates lipid A-core from the inner to the outer leaflet of the inner membrane. Transmembrane domains (TMD) form a pore in the inner membrane and the ATP-binding domain (NBD) is responsible for energy generation. This Sodalis glossinidius (strain morsitans) protein is ATP-dependent lipid A-core flippase.